We begin with the raw amino-acid sequence, 353 residues long: Ubiquinol oxidase 1, mitochondrial (353 aa).

The transit peptide at 1-69 (MMTRGATRMT…RHFPVMGSRS (69 aa)) directs the protein to the mitochondrion. The disordered stretch occupies residues 77–99 (DKQHDKKAENGSAAATGGGDGGD). The helical transmembrane segment at 178-198 (AMMLETVAAVPGMVGGMLLHC) threads the bilayer. Residues Glu-182, Glu-221, and His-224 each coordinate Fe cation. The chain crosses the membrane as a helical span at residues 240-260 (ALVFAVQGVFFNAYFVTYLLS). Glu-272, Glu-323, and His-326 together coordinate Fe cation.

This sequence belongs to the alternative oxidase family. In terms of assembly, homodimer; disulfide-linked. Requires Fe cation as cofactor.

The protein localises to the mitochondrion inner membrane. It carries out the reaction 2 a ubiquinol + O2 = 2 a ubiquinone + 2 H2O. Its activity is regulated as follows. Stimulated by reduction of the disulfide bond and the presence of pyruvate. Its function is as follows. Catalyzes the cyanide-resistant oxidation of ubiquinol and the reduction of molecular oxygen to water, but does not translocate protons and consequently is not linked to oxidative phosphorylation. May increase respiration when the cytochrome respiratory pathway is restricted, or in response to low temperatures. The protein is Ubiquinol oxidase 1, mitochondrial (AOX1) of Nicotiana tabacum (Common tobacco).